The chain runs to 472 residues: tRNA modification GTPase MnmE (472 aa).

(6S)-5-formyl-5,6,7,8-tetrahydrofolate-binding residues include R28, E91, and K130. Residues 225–391 (GAKVVLAGKT…LSEKAYSVLA (167 aa)) form the TrmE-type G domain. N235 contributes to the K(+) binding site. GTP is bound by residues 235–240 (NAGKSS), 254–260 (SDIHGTT), and 279–282 (DTAG). S239 lines the Mg(2+) pocket. Residues S254, I256, and T259 each coordinate K(+). T260 serves as a coordination point for Mg(2+). K472 is a (6S)-5-formyl-5,6,7,8-tetrahydrofolate binding site.

Belongs to the TRAFAC class TrmE-Era-EngA-EngB-Septin-like GTPase superfamily. TrmE GTPase family. As to quaternary structure, homodimer. Heterotetramer of two MnmE and two MnmG subunits. It depends on K(+) as a cofactor.

It is found in the cytoplasm. Its function is as follows. Exhibits a very high intrinsic GTPase hydrolysis rate. Involved in the addition of a carboxymethylaminomethyl (cmnm) group at the wobble position (U34) of certain tRNAs, forming tRNA-cmnm(5)s(2)U34. This Treponema denticola (strain ATCC 35405 / DSM 14222 / CIP 103919 / JCM 8153 / KCTC 15104) protein is tRNA modification GTPase MnmE.